The primary structure comprises 148 residues: Large ribosomal subunit protein bL9 (148 aa).

The protein belongs to the bacterial ribosomal protein bL9 family.

Functionally, binds to the 23S rRNA. This Listeria monocytogenes serotype 4a (strain HCC23) protein is Large ribosomal subunit protein bL9.